Consider the following 398-residue polypeptide: 1-deoxy-D-xylulose 5-phosphate reductoisomerase (398 aa).

NADPH-binding residues include Thr28, Gly29, Ser30, Ile31, Gly54, Asn57, and Asn135. Lys136 contributes to the 1-deoxy-D-xylulose 5-phosphate binding site. Glu137 contributes to the NADPH binding site. Position 159 (Asp159) interacts with Mn(2+). 1-deoxy-D-xylulose 5-phosphate contacts are provided by Ser160, Glu161, Ser185, and His208. A Mn(2+)-binding site is contributed by Glu161. Gly214 serves as a coordination point for NADPH. 4 residues coordinate 1-deoxy-D-xylulose 5-phosphate: Ser221, Asn226, Lys227, and Glu230. Glu230 contacts Mn(2+).

Belongs to the DXR family. It depends on Mg(2+) as a cofactor. Requires Mn(2+) as cofactor.

It carries out the reaction 2-C-methyl-D-erythritol 4-phosphate + NADP(+) = 1-deoxy-D-xylulose 5-phosphate + NADPH + H(+). It functions in the pathway isoprenoid biosynthesis; isopentenyl diphosphate biosynthesis via DXP pathway; isopentenyl diphosphate from 1-deoxy-D-xylulose 5-phosphate: step 1/6. In terms of biological role, catalyzes the NADPH-dependent rearrangement and reduction of 1-deoxy-D-xylulose-5-phosphate (DXP) to 2-C-methyl-D-erythritol 4-phosphate (MEP). The polypeptide is 1-deoxy-D-xylulose 5-phosphate reductoisomerase (Rhodococcus jostii (strain RHA1)).